The primary structure comprises 206 residues: dCTP deaminase, dUMP-forming (206 aa).

Residues R117–R122, D135, T143–E145, Q163, Y177, K184, and Q188 contribute to the dCTP site. E145 acts as the Proton donor/acceptor in catalysis.

Belongs to the dCTP deaminase family. Homotrimer.

It catalyses the reaction dCTP + 2 H2O = dUMP + NH4(+) + diphosphate. The protein operates within pyrimidine metabolism; dUMP biosynthesis; dUMP from dCTP: step 1/1. Functionally, bifunctional enzyme that catalyzes both the deamination of dCTP to dUTP and the hydrolysis of dUTP to dUMP without releasing the toxic dUTP intermediate. This is dCTP deaminase, dUMP-forming from Methanococcus vannielii (strain ATCC 35089 / DSM 1224 / JCM 13029 / OCM 148 / SB).